Consider the following 323-residue polypeptide: Transcription factor MYB56 (323 aa).

Positions methionine 1–glutamate 14 are enriched in basic and acidic residues. The disordered stretch occupies residues methionine 1 to serine 84. Positions asparagine 27–valine 60 are enriched in polar residues. Over residues glutamate 66–leucine 78 the composition is skewed to basic and acidic residues. 2 HTH myb-type domains span residues threonine 88–leucine 139 and aspartate 140–threonine 194. 2 consecutive DNA-binding regions (H-T-H motif) follow at residues tryptophan 116–glutamine 138 and tryptophan 167–methionine 190. Positions arginine 192–serine 217 are disordered.

Forms homodimer. Interacts with the dephosphorylated active form of BES1 in the nucleus of quiescent center (QC) cells. Interacts with BPM1, BPM2, BPM3, BPM4, BPM5 and BPM6 at the promoter of FLOWERING LOCUS T (FT). Mostly expressed in flowers (at protein level) and siliques, and, to a lower extent, in roots, stems and leaves. Expressed in embryos (e.g. heart and torpedo stages) and cotyledons, and, at low levels, in roots and inflorescence. Accumulates specifically in root apical meristem quiescent center (QC) and vascular initial cells.

The protein resides in the nucleus. It localises to the cytoplasm. The protein localises to the cytosol. In terms of biological role, acts as a cell-specific local repressor of quiescent center (QC) self-renewal by cell divisions in the primary root. Counteracts brassinosteroid (BR)-mediated cell division in the QC cells. Regulates maternally seed size, especially before the heart stage, promoting both endothelial cells expansion and cell number in the outer integument layer of the seed coat. Modulates the expression of genes involved in cell wall metabolism such as cell division and expansion. Negative regulator of flowering via the repression of FT transcription. In Arabidopsis thaliana (Mouse-ear cress), this protein is Transcription factor MYB56.